A 405-amino-acid chain; its full sequence is MQRNGVVECSVCRSRLVVPSPRSVSRAYDKHRSKISSKFRALNVLLVVGDCILVGLQPILVFMSKVDGKFQFSPISVNFLTEVTKVVFAIVMLIIQSRKQKVGEKPLLARSTFIQAARNNALLAVPALLYAINNYLKFIMQLYFNPSTVKMLSNLKVLVIAVLLKFIMKRRFSVIQWEALALLLIGISINQLRTVPAGNTAFGLPVTAIAYIYTLIFVTVPSLASVYNEYALKSQYDTSIYLQNLFLYGYGAIFNFLGILGTALFQGPESFNILRGHSRATMFLICNNAAQGILSSFFFKYADTILKKYSSTVATIFTGLASAAFLGHTLTINFLLGISVVFISMHQFFSPLAKAKDDKPAELLELEDTQNHRSSESSFVNMTAGAAEDASHRIGTDERQPLLPT.

The Cytoplasmic portion of the chain corresponds to M1–N43. A helical transmembrane segment spans residues V44–S64. At K65–P74 the chain is on the lumenal side. A helical membrane pass occupies residues I75–I95. Over Q96–A121 the chain is Cytoplasmic. The chain crosses the membrane as a helical span at residues L122 to L142. At Y143–S147 the chain is on the lumenal side. A helical membrane pass occupies residues T148–M168. The Cytoplasmic portion of the chain corresponds to K169–R171. Residues F172 to L192 traverse the membrane as a helical segment. Residues R193–T200 are Lumenal-facing. A helical membrane pass occupies residues A201 to P221. Topologically, residues S222–N244 are cytoplasmic. Residues L245–F265 traverse the membrane as a helical segment. Topologically, residues Q266–T281 are lumenal. The chain crosses the membrane as a helical span at residues M282–A302. Topologically, residues D303 to S322 are cytoplasmic. The helical transmembrane segment at A323–I343 threads the bilayer. Residues S344–T405 are Lumenal-facing. Residues D368–T405 form a disordered region. The span at D389–T405 shows a compositional bias: basic and acidic residues.

The protein belongs to the nucleotide-sugar transporter family. CMP-Sialate:CMP antiporter (TC 2.A.7.12) subfamily.

The protein localises to the golgi apparatus membrane. Functionally, sugar transporter involved in the transport of CMP-sialic acid from the cytoplasm into the Golgi. May transport important nucleotide sugars such as CMP-Kdo (2-keto-3-deoxy-D-manno-octulosonic acid) in physiological conditions. The polypeptide is CMP-sialic acid transporter 5 (Oryza sativa subsp. japonica (Rice)).